The sequence spans 402 residues: Cysteine-rich venom protein (402 aa).

Residues 1–13 (MNLALFIIFATIF) form the signal peptide. The region spanning 57 to 199 (LETHNQLRNK…VKKVLYTCNY (143 aa)) is the SCP domain.

This sequence belongs to the CRISP family. In terms of processing, contains 7 disulfide bonds. In terms of tissue distribution, expressed by the venom gland.

The protein resides in the secreted. This Tityus serrulatus (Brazilian scorpion) protein is Cysteine-rich venom protein.